A 1955-amino-acid polypeptide reads, in one-letter code: Protocadherin-15 (1955 aa).

An N-terminal signal peptide occupies residues 1–26 (MFRQFYLWTCLASGIILGSLFEICLG). At 27 to 1376 (QYDDDCKLAR…GESLGYTEGA (1350 aa)) the chain is on the extracellular side. An intrachain disulfide couples Cys32 to Cys120. Cadherin domains are found at residues 40–147 (PATI…SPTF), 148–265 (KHES…GPMF), 278–395 (RPLT…SPYF), 396–509 (TMPS…TPTF), 510–616 (PEIS…PPRF), 617–717 (PQLM…APVF), 719–819 (PYLP…SPVF), 820–926 (TNST…PPVF), 927–1035 (SKRI…IPRF), 1037–1144 (QEEY…PPVF), and 1145–1259 (QKKF…PPTL). Residues Asn52, Asn97, and Asn201 are each glycosylated (N-linked (GlcNAc...) asparagine). Residues Asn419, Asn559, Asn662, Asn724, Asn768, Asn821, and Asn851 are each glycosylated (N-linked (GlcNAc...) asparagine). 3 N-linked (GlcNAc...) asparagine glycosylation sites follow: Asn1064, Asn1084, and Asn1175. A helical transmembrane segment spans residues 1377-1397 (LLALAFIIILCCIPAILVVLV). Over 1398–1955 (SYRQFKVRQA…KQSHSQSTSL (558 aa)) the chain is Cytoplasmic. Residues 1426-1444 (VPAPAPVAAPPPPPPPPPG) are compositionally biased toward pro residues. Disordered regions lie at residues 1426 to 1446 (VPAPAPVAAPPPPPPPPPGAH), 1601 to 1623 (QGTRQKAENENTGICTNKRGSSN), 1745 to 1766 (CPLPPPPPISPPSPPPAPAPLA), and 1928 to 1955 (ITSEQNKGSLNNIVEGTEKQSHSQSTSL). Residues 1928-1941 (ITSEQNKGSLNNIV) show a composition bias toward polar residues.

As to quaternary structure, antiparallel heterodimer with CDH23. Found in a complex with TMIE and LHFPL5. Interacts with LHFPL5/TMHS; this interaction is required for efficient localization to hair bundles. Interacts with MYO7A. Interacts with USH1G; this interaction may recruit USH1G to the plasma membrane. Interacts with TOMT. Isoforms CD1 and CD3 interact with TMC1 (via N-terminus) and TMC2 (via N-terminus). Expressed in brain, lung, kidney, spleen and testis. Found also in the inner and outer synaptic layers, and the nerve fiber layer in adult and fetal retinas. Found in the supporting cells, outer sulcus cells and spiral ganglion of fetal cochlea. Expressed in cytotoxic tumor-derived T- and NK-cell lines as well as biopsies of nasal NK/T-cell lymphomas. Not detected in normal or in vitro activated peripheral blood cells, CD4 or CD8 lymphocytes or NK cells. Isoform 3 is expressed in brain, heart, cerebellum and kidney. CD1 isoforms, such as isoform 1, have a limited pattern of expression and is detected in testis, retina and cochlea. CD2 isoforms, such as isoforms 4 and 5, are expressed in heart, kidney, thymus, spleen, testis, retina and cochlea. CD3 isoforms, such as isoform 6, are widely expressed.

The protein localises to the cell membrane. It localises to the secreted. Calcium-dependent cell-adhesion protein. Essential for maintenance of normal retinal and cochlear function. The protein is Protocadherin-15 (PCDH15) of Homo sapiens (Human).